The primary structure comprises 170 residues: Peptide methionine sulfoxide reductase MsrA (170 aa).

Cysteine 14 is an active-site residue.

This sequence belongs to the MsrA Met sulfoxide reductase family.

It catalyses the reaction L-methionyl-[protein] + [thioredoxin]-disulfide + H2O = L-methionyl-(S)-S-oxide-[protein] + [thioredoxin]-dithiol. The catalysed reaction is [thioredoxin]-disulfide + L-methionine + H2O = L-methionine (S)-S-oxide + [thioredoxin]-dithiol. Functionally, has an important function as a repair enzyme for proteins that have been inactivated by oxidation. Catalyzes the reversible oxidation-reduction of methionine sulfoxide in proteins to methionine. The protein is Peptide methionine sulfoxide reductase MsrA of Streptomyces avermitilis (strain ATCC 31267 / DSM 46492 / JCM 5070 / NBRC 14893 / NCIMB 12804 / NRRL 8165 / MA-4680).